The following is a 188-amino-acid chain: dCTP deaminase (188 aa).

Residues 111-116, 135-137, Gln156, Tyr170, and Gln180 contribute to the dCTP site; these read KSTYAR and TLE. The active-site Proton donor/acceptor is the Glu137.

This sequence belongs to the dCTP deaminase family. In terms of assembly, homotrimer.

The catalysed reaction is dCTP + H2O + H(+) = dUTP + NH4(+). Its pathway is pyrimidine metabolism; dUMP biosynthesis; dUMP from dCTP (dUTP route): step 1/2. Catalyzes the deamination of dCTP to dUTP. The chain is dCTP deaminase from Paracidovorax citrulli (strain AAC00-1) (Acidovorax citrulli).